A 158-amino-acid chain; its full sequence is 6,7-dimethyl-8-ribityllumazine synthase (158 aa).

5-amino-6-(D-ribitylamino)uracil-binding positions include phenylalanine 23, 61–63, and 85–87; these read SME and AVI. Position 90–91 (90–91) interacts with (2S)-2-hydroxy-3-oxobutyl phosphate; it reads DT. Histidine 93 acts as the Proton donor in catalysis. Tyrosine 118 lines the 5-amino-6-(D-ribitylamino)uracil pocket. Arginine 132 contributes to the (2S)-2-hydroxy-3-oxobutyl phosphate binding site.

This sequence belongs to the DMRL synthase family.

The enzyme catalyses (2S)-2-hydroxy-3-oxobutyl phosphate + 5-amino-6-(D-ribitylamino)uracil = 6,7-dimethyl-8-(1-D-ribityl)lumazine + phosphate + 2 H2O + H(+). The protein operates within cofactor biosynthesis; riboflavin biosynthesis; riboflavin from 2-hydroxy-3-oxobutyl phosphate and 5-amino-6-(D-ribitylamino)uracil: step 1/2. Functionally, catalyzes the formation of 6,7-dimethyl-8-ribityllumazine by condensation of 5-amino-6-(D-ribitylamino)uracil with 3,4-dihydroxy-2-butanone 4-phosphate. This is the penultimate step in the biosynthesis of riboflavin. This is 6,7-dimethyl-8-ribityllumazine synthase from Prochlorococcus marinus (strain MIT 9211).